Here is a 173-residue protein sequence, read N- to C-terminus: MNLENKNKEIPEEFKKLAEDFSKNGFITTSLDNLINWSRAGSLHWMTFGLACCAVEMMQTAMPRYDLERFGAAPRGSPRQSDVMIVAGTLTNKMAPALRKVYDQMPEPRYVISMGSCANGGGYYHYSYSVVRGCDKIVPVDIYVPGCPPSAEALLYGILQLQKKIRNKGSFER.

[4Fe-4S] cluster contacts are provided by Cys-52, Cys-53, Cys-117, and Cys-147.

It belongs to the complex I 20 kDa subunit family. NDH-1 is composed of 14 different subunits. Subunits NuoB, C, D, E, F, and G constitute the peripheral sector of the complex. Requires [4Fe-4S] cluster as cofactor.

It is found in the cell inner membrane. It carries out the reaction a quinone + NADH + 5 H(+)(in) = a quinol + NAD(+) + 4 H(+)(out). In terms of biological role, NDH-1 shuttles electrons from NADH, via FMN and iron-sulfur (Fe-S) centers, to quinones in the respiratory chain. Couples the redox reaction to proton translocation (for every two electrons transferred, four hydrogen ions are translocated across the cytoplasmic membrane), and thus conserves the redox energy in a proton gradient. The protein is NADH-quinone oxidoreductase subunit B of Pelagibacter ubique (strain HTCC1062).